We begin with the raw amino-acid sequence, 274 residues long: Large ribosomal subunit protein uL2 (274 aa).

A disordered region spans residues 222 to 274 (GVAMNPVDHPHGGGEGRGKGHHPQSPWGQLAKGYKTRRGKKASDKLIVRRRNG). A compositionally biased stretch (basic and acidic residues) spans 229 to 239 (DHPHGGGEGRG).

The protein belongs to the universal ribosomal protein uL2 family. As to quaternary structure, part of the 50S ribosomal subunit. Forms a bridge to the 30S subunit in the 70S ribosome.

In terms of biological role, one of the primary rRNA binding proteins. Required for association of the 30S and 50S subunits to form the 70S ribosome, for tRNA binding and peptide bond formation. It has been suggested to have peptidyltransferase activity; this is somewhat controversial. Makes several contacts with the 16S rRNA in the 70S ribosome. This Thermosipho africanus (strain TCF52B) protein is Large ribosomal subunit protein uL2.